The primary structure comprises 902 residues: Protein translocase subunit SecA (902 aa).

ATP contacts are provided by residues Gln87, 105–109 (GEGKT), and Asp512. Residues 847 to 902 (DAERLARQQQLSHLDDQSAAAQEMASQTGDRKIGRNDPCPCGSGKKYKQCHGRLNA) are disordered. Zn(2+) is bound by residues Cys885, Cys887, Cys896, and His897. Residues 891 to 902 (KKYKQCHGRLNA) are compositionally biased toward basic residues.

Belongs to the SecA family. In terms of assembly, monomer and homodimer. Part of the essential Sec protein translocation apparatus which comprises SecA, SecYEG and auxiliary proteins SecDF-YajC and YidC. Zn(2+) is required as a cofactor.

Its subcellular location is the cell inner membrane. The protein resides in the cytoplasm. It carries out the reaction ATP + H2O + cellular proteinSide 1 = ADP + phosphate + cellular proteinSide 2.. Its function is as follows. Part of the Sec protein translocase complex. Interacts with the SecYEG preprotein conducting channel. Has a central role in coupling the hydrolysis of ATP to the transfer of proteins into and across the cell membrane, serving both as a receptor for the preprotein-SecB complex and as an ATP-driven molecular motor driving the stepwise translocation of polypeptide chains across the membrane. This is Protein translocase subunit SecA from Edwardsiella ictaluri (strain 93-146).